The primary structure comprises 477 residues: 3-isopropylmalate dehydratase large subunit (477 aa).

[4Fe-4S] cluster-binding residues include C352, C413, and C416.

The protein belongs to the aconitase/IPM isomerase family. LeuC type 1 subfamily. Heterodimer of LeuC and LeuD. Requires [4Fe-4S] cluster as cofactor.

It carries out the reaction (2R,3S)-3-isopropylmalate = (2S)-2-isopropylmalate. The protein operates within amino-acid biosynthesis; L-leucine biosynthesis; L-leucine from 3-methyl-2-oxobutanoate: step 2/4. In terms of biological role, catalyzes the isomerization between 2-isopropylmalate and 3-isopropylmalate, via the formation of 2-isopropylmaleate. The sequence is that of 3-isopropylmalate dehydratase large subunit from Pseudomonas entomophila (strain L48).